Consider the following 440-residue polypeptide: Histidinol dehydrogenase (440 aa).

Positions 139, 200, and 223 each coordinate NAD(+). Substrate contacts are provided by serine 246, glutamine 268, and histidine 271. Residues glutamine 268 and histidine 271 each contribute to the Zn(2+) site. Active-site proton acceptor residues include glutamate 336 and histidine 337. 4 residues coordinate substrate: histidine 337, aspartate 370, glutamate 424, and histidine 429. Aspartate 370 lines the Zn(2+) pocket. Zn(2+) is bound at residue histidine 429.

It belongs to the histidinol dehydrogenase family. Zn(2+) serves as cofactor.

It catalyses the reaction L-histidinol + 2 NAD(+) + H2O = L-histidine + 2 NADH + 3 H(+). It participates in amino-acid biosynthesis; L-histidine biosynthesis; L-histidine from 5-phospho-alpha-D-ribose 1-diphosphate: step 9/9. Functionally, catalyzes the sequential NAD-dependent oxidations of L-histidinol to L-histidinaldehyde and then to L-histidine. This is Histidinol dehydrogenase from Bordetella bronchiseptica (strain ATCC BAA-588 / NCTC 13252 / RB50) (Alcaligenes bronchisepticus).